The primary structure comprises 276 residues: Shikimate dehydrogenase (NADP(+)) (276 aa).

Shikimate-binding positions include 18–20 (SKS) and T65. The active-site Proton acceptor is the K69. Residue E81 participates in NADP(+) binding. Positions 90 and 106 each coordinate shikimate. NADP(+)-binding positions include 130–134 (GAGGA), 154–159 (NRTSSK), and M217. Position 219 (Y219) interacts with shikimate. Residue G241 participates in NADP(+) binding.

This sequence belongs to the shikimate dehydrogenase family. As to quaternary structure, homodimer.

The catalysed reaction is shikimate + NADP(+) = 3-dehydroshikimate + NADPH + H(+). It functions in the pathway metabolic intermediate biosynthesis; chorismate biosynthesis; chorismate from D-erythrose 4-phosphate and phosphoenolpyruvate: step 4/7. Its function is as follows. Involved in the biosynthesis of the chorismate, which leads to the biosynthesis of aromatic amino acids. Catalyzes the reversible NADPH linked reduction of 3-dehydroshikimate (DHSA) to yield shikimate (SA). The sequence is that of Shikimate dehydrogenase (NADP(+)) from Vibrio atlanticus (strain LGP32) (Vibrio splendidus (strain Mel32)).